Reading from the N-terminus, the 231-residue chain is Pathogenesis-related thaumatin-like protein 3.7 (231 aa).

A signal peptide spans 1 to 27 (MATVSDLALLLVAGLVAISLHMQEAGA). Disulfide bonds link Cys36–Cys230, Cys77–Cys87, Cys92–Cys98, Cys143–Cys218, Cys148–Cys201, Cys156–Cys166, Cys170–Cys179, and Cys180–Cys188.

This sequence belongs to the thaumatin family.

In terms of biological role, may be involved in disease resistance. In Cryptomeria japonica (Japanese cedar), this protein is Pathogenesis-related thaumatin-like protein 3.7.